The following is a 314-amino-acid chain: Acetaldehyde dehydrogenase 1/2 (314 aa).

12 to 15 (SGNI) contributes to the NAD(+) binding site. Catalysis depends on Cys-130, which acts as the Acyl-thioester intermediate. NAD(+)-binding positions include 161–169 (SAGPGTRAN) and Asn-288.

It belongs to the acetaldehyde dehydrogenase family.

The enzyme catalyses acetaldehyde + NAD(+) + CoA = acetyl-CoA + NADH + H(+). This is Acetaldehyde dehydrogenase 1/2 from Rhizorhabdus wittichii (strain DSM 6014 / CCUG 31198 / JCM 15750 / NBRC 105917 / EY 4224 / RW1) (Sphingomonas wittichii).